The primary structure comprises 52 residues: Large ribosomal subunit protein bL32c (52 aa).

It belongs to the bacterial ribosomal protein bL32 family.

Its subcellular location is the plastid. The protein resides in the chloroplast. This is Large ribosomal subunit protein bL32c from Aethionema grandiflorum (Persian stone-cress).